An 874-amino-acid chain; its full sequence is Isopimaradiene synthase, chloroplastic (874 aa).

Residues 1–12 are compositionally biased toward polar residues; that stretch reads MALPSSSLSSRI. The tract at residues 1-20 is disordered; that stretch reads MALPSSSLSSRIPTGPHPLT. A chloroplast-targeting transit peptide spans 1 to 37; sequence MALPSSSLSSRIPTGPHPLTHTQCIPHFSTTINAGIS. 6 residues coordinate Mg(2+): Asp407, Asp409, Asp626, Asp630, Asn770, and Glu778. A DXDD motif motif is present at residues 407–410; sequence DIDD. A DDXXD motif motif is present at residues 626–630; it reads DDLYD.

The protein belongs to the terpene synthase family. Tpsd subfamily. Requires Mg(2+) as cofactor. The cofactor is Mn(2+).

The protein localises to the plastid. It localises to the chloroplast. The catalysed reaction is (+)-copalyl diphosphate = isopimara-8(14),15-diene + diphosphate. It participates in terpene metabolism; oleoresin biosynthesis. In terms of biological role, terpene synthase (TPS) involved in the biosynthesis of diterpene natural products included in conifer oleoresin secretions and volatile emissions; these compounds contribute to biotic and abiotic stress defense against herbivores and pathogens. Catalyzes the conversion of (+)-copalyl diphosphate ((+)-CPP) to isopimaradiene. The polypeptide is Isopimaradiene synthase, chloroplastic (Picea sitchensis (Sitka spruce)).